The primary structure comprises 334 residues: Phosphate acyltransferase (334 aa).

It belongs to the PlsX family. Homodimer. Probably interacts with PlsY.

Its subcellular location is the cytoplasm. It carries out the reaction a fatty acyl-[ACP] + phosphate = an acyl phosphate + holo-[ACP]. It participates in lipid metabolism; phospholipid metabolism. Its function is as follows. Catalyzes the reversible formation of acyl-phosphate (acyl-PO(4)) from acyl-[acyl-carrier-protein] (acyl-ACP). This enzyme utilizes acyl-ACP as fatty acyl donor, but not acyl-CoA. The chain is Phosphate acyltransferase from Desulfitobacterium hafniense (strain DSM 10664 / DCB-2).